The chain runs to 230 residues: UPF0173 metal-dependent hydrolase RSKD131_0588 (230 aa).

Belongs to the UPF0173 family.

This is UPF0173 metal-dependent hydrolase RSKD131_0588 from Cereibacter sphaeroides (strain KD131 / KCTC 12085) (Rhodobacter sphaeroides).